Consider the following 319-residue polypeptide: 4-diphosphocytidyl-2-C-methyl-D-erythritol kinase (319 aa).

Lys-18 is an active-site residue. 103–113 (PIGAGLAGGST) is an ATP binding site. The active site involves Asp-145.

Belongs to the GHMP kinase family. IspE subfamily.

It carries out the reaction 4-CDP-2-C-methyl-D-erythritol + ATP = 4-CDP-2-C-methyl-D-erythritol 2-phosphate + ADP + H(+). It participates in isoprenoid biosynthesis; isopentenyl diphosphate biosynthesis via DXP pathway; isopentenyl diphosphate from 1-deoxy-D-xylulose 5-phosphate: step 3/6. In terms of biological role, catalyzes the phosphorylation of the position 2 hydroxy group of 4-diphosphocytidyl-2C-methyl-D-erythritol. The protein is 4-diphosphocytidyl-2-C-methyl-D-erythritol kinase of Prochlorococcus marinus (strain NATL1A).